The following is a 383-amino-acid chain: Alanine racemase (383 aa).

The Proton acceptor; specific for D-alanine role is filled by lysine 50. At lysine 50 the chain carries N6-(pyridoxal phosphate)lysine. Arginine 151 provides a ligand contact to substrate. Tyrosine 279 (proton acceptor; specific for L-alanine) is an active-site residue. Substrate is bound at residue methionine 327.

It belongs to the alanine racemase family. Pyridoxal 5'-phosphate serves as cofactor.

It carries out the reaction L-alanine = D-alanine. The protein operates within amino-acid biosynthesis; D-alanine biosynthesis; D-alanine from L-alanine: step 1/1. In terms of biological role, catalyzes the interconversion of L-alanine and D-alanine. May also act on other amino acids. In Chlorobaculum tepidum (strain ATCC 49652 / DSM 12025 / NBRC 103806 / TLS) (Chlorobium tepidum), this protein is Alanine racemase (alr).